A 315-amino-acid polypeptide reads, in one-letter code: Tetraacyldisaccharide 4'-kinase (315 aa).

45 to 52 (SVGGSGKT) is a binding site for ATP.

Belongs to the LpxK family.

It catalyses the reaction a lipid A disaccharide + ATP = a lipid IVA + ADP + H(+). The protein operates within glycolipid biosynthesis; lipid IV(A) biosynthesis; lipid IV(A) from (3R)-3-hydroxytetradecanoyl-[acyl-carrier-protein] and UDP-N-acetyl-alpha-D-glucosamine: step 6/6. Functionally, transfers the gamma-phosphate of ATP to the 4'-position of a tetraacyldisaccharide 1-phosphate intermediate (termed DS-1-P) to form tetraacyldisaccharide 1,4'-bis-phosphate (lipid IVA). This Aquifex aeolicus (strain VF5) protein is Tetraacyldisaccharide 4'-kinase.